The primary structure comprises 55 residues: MNNSLFDLNLNKGVETQKSDLSPQSASVLKTSIKVSKKYCKGVTLTCGCNITGGK.

The propeptide at 1-24 is cleaved by ElxP; the sequence is MNNSLFDLNLNKGVETQKSDLSPQ. S25 carries the D-lactate; by the dehydratase ElxB and the dehydrogenase ElxO modification. At S27 the chain carries 2,3-didehydroalanine (Ser); by the dehydratase ElxB. T31 carries the 2,3-didehydrobutyrine; by the dehydratase ElxB modification. 2,3-didehydroalanine (Ser); by the dehydratase ElxB is present on S32. A cross-link (lanthionine (Ser-Cys); by the dehydratase ElxB and the cyclase ElxC) is located at residues 36–40; the sequence is SKKYC. Cross-links (beta-methyllanthionine (Thr-Cys); by the dehydratase ElxB and the cyclase ElxC) lie at residues 44-47 and 46-49; these read TLTC and TCGC. A 2,3-didehydrobutyrine; by the dehydratase ElxB modification is found at T52.

The protein belongs to the type A lantibiotic family. Post-translationally, maturation of this lantibiotic involves the enzymatic conversion of Thr, and Ser into dehydrated AA by ElxB and the formation of thioether bonds with cysteine by the cyclase ElxC. The next steps are cleavage of the leader peptide by ElxP and membrane translocation by ElxT. The leader peptide may be removed before membrane translocation, in contrast to other lantibiotics for which the cleavage occur after translocation. This is suggested by the probable cytoplasmic localization of the serine protease ElxP that cleaves the leader peptide. It is not established whether the 2,3-didehydrobutyrine is the E- or Z-isomer. In terms of processing, the N-terminal D-lactate is probably produced by dehydration of Ser-25 by ElxB, followed by proteolytic removal of the leader peptide by the serine protease ElxP and hydrolysis of the resulting new N-terminal dehydroalanine. This hydrolysis may occur spontaneously. The pyruvate group thus formed is reduced to D-lactate by the NADPH-dependent oxidoreductase ElxO. This N-terminal D-lactate protects the lantibiotic against degradation against aminopeptidase.

Lanthionine-containing peptide antibiotic (lantibiotic) active on Gram-positive bacteria such as staphylococci, enterococci and streptococci. The bactericidal activity of lantibiotics is based on depolarization of energized bacterial cytoplasmic membranes, initiated by the formation of aqueous transmembrane pores. In Staphylococcus epidermidis, this protein is Lantibiotic epilancin (elkA).